A 4080-amino-acid chain; its full sequence is Hybrid PKS-NRPS synthetase poxE (4080 aa).

The Ketosynthase family 3 (KS3) domain maps to arginine 8–alanine 442. Catalysis depends on for beta-ketoacyl synthase activity residues cysteine 181, histidine 320, and histidine 362. The segment at valine 554–methionine 878 is malonyl-CoA:ACP transacylase (MAT) domain. An N-terminal hotdog fold region spans residues histidine 944–valine 1078. In terms of domain architecture, PKS/mFAS DH spans histidine 944–aspartate 1246. The tract at residues proline 945 to threonine 1243 is dehydratase (DH) domain. Residue histidine 976 is the Proton acceptor; for dehydratase activity of the active site. Residues methionine 1093–aspartate 1246 form a C-terminal hotdog fold region. The active-site Proton donor; for dehydratase activity is aspartate 1152. The tract at residues histidine 1400 to aspartate 1585 is methyltransferase (MT) domain. Residues threonine 2118 to isoleucine 2292 form a ketoreductase (KR)domain region. A peptidyl carrier protein region spans residues threonine 2399–leucine 2478. The 77-residue stretch at glutamate 2405–leucine 2481 folds into the Carrier 1 domain. O-(pantetheine 4'-phosphoryl)serine is present on serine 2441. Residues serine 2488–glutamate 2569 form a disordered region. Residues valine 2511 to isoleucine 2525 are compositionally biased toward basic and acidic residues. Residues serine 2528–serine 2545 are compositionally biased toward low complexity. Residues aspartate 2551 to isoleucine 2565 are compositionally biased toward polar residues. Positions lysine 2607–serine 3036 are condensation. Positions aspartate 3069 to isoleucine 3478 are adenylation. Positions alanine 3593–glutamate 3673 constitute a Carrier 2 domain. The thiolation stretch occupies residues alanine 3598–lysine 3670. The residue at position 3633 (serine 3633) is an O-(pantetheine 4'-phosphoryl)serine. Residues leucine 3740–arginine 3959 are reductase (RED) domain.

In the C-terminal section; belongs to the NRP synthetase family.

Its pathway is secondary metabolite biosynthesis. Hybrid PKS-NRPS synthetase; part of the gene cluster that mediates the biosynthesis of oxaleimides, cytotoxic compounds containing an unusual disubstituted succinimide moiety. The first step of the pathway is provided by the HR-PKS poxF that serves in a new mode of collaborative biosynthesis with the PKS-NRPS poxE, by providing the olefin containing amino acid substrate via the synthesis of an ACP-bound dec-4-enoate. The cytochrome P450 monooxygenase poxM-catalyzed oxidation at the alpha-position creates the enzyme-bound 2-hydroxydec-4-enoyl-ACP thioester, which may be prone to spontaneous hydrolysis to yield 2-hydroxydec-4-enoic acid due to increased electrophilicity of the carbonyl. 2-hydroxydec-4-enoic acid can then be further oxidized by poxM to yield the alpha-ketoacid 2-oxodec-4-enoicacid, which is reductively aminated by the aminotransferase poxL to yield (S,E)-2-aminodec-4-enoic acid. The Hybrid PKS-NRPS synthetase poxE then performs condensation between the octaketide product of its PKS modules and the amino group of (S,E)-2-aminodec-4-enoic acid which is activated and incorporated by the adenylation domain. The resulting aminoacyl product can be cyclized by the Diels-Alderase PoxQ and reductively released by the reductive (R) domain of poxE to yield an aldehyde intermediate. The released aldehyde is then substrate for a Knoevenagel condensation by the hydrolyase poxO followed by an oxidation at the 5-position of the pyrrolidone ring. The presence of the olefin from the amino acid building block allows for migration of the substituted allyl group to occur. This allylic transposition reaction takes place in a conjugate addition, semipinacol-like fashion to yield a succinimide intermediate. Iterative two-electron oxidations of the C7 methyl of the succinimide intermediate to the carboxylic acid can be catalyzed by one of two remaining cytochrome P450 monooxygenasess poxC or poxD to yield oxaleimide A. Subsequent oxidation yields the maleimide scaffold oxaleimide I. Both oxaleimide A and oxaleimide I can undergo oxidative modifications in the decalin ring to yield the series of products oxaleimides B to H. In Penicillium oxalicum, this protein is Hybrid PKS-NRPS synthetase poxE.